Consider the following 369-residue polypeptide: 3 beta-hydroxysteroid dehydrogenase type 7 (369 aa).

Residue Y159 is the Proton acceptor of the active site. K163 is an NAD(+) binding site. Transmembrane regions (helical) follow at residues L289–L309 and L312–S334.

The protein belongs to the 3-beta-HSD family. Predominantly expressed in liver.

Its subcellular location is the endoplasmic reticulum membrane. The catalysed reaction is 7alpha-hydroxycholesterol + NAD(+) = 7alpha-hydroxycholest-4-en-3-one + NADH + H(+). The enzyme catalyses 7alpha,25-dihydroxycholesterol + NAD(+) = 7alpha,25-dihydroxy-4-cholesten-3-one + NADH + H(+). It carries out the reaction (25R)-cholest-5-en-3beta,7alpha,26-triol + NAD(+) = (25R)-7alpha,26-dihydroxycholest-4-en-3-one + NADH + H(+). It catalyses the reaction (24S)-7alpha-dihydroxycholesterol + NAD(+) = (24S)-7alpha,24-dihydroxycholest-4-en-3-one + NADH + H(+). The protein operates within lipid metabolism; steroid biosynthesis. The 3-beta-HSD enzymatic system plays a crucial role in the biosynthesis of all classes of hormonal steroids. HSD VII is active against four 7-alpha-hydroxylated sterols. Does not metabolize several different C(19/21) steroids as substrates. Involved in bile acid synthesis. Plays a key role in cell positioning and movement in lymphoid tissues by mediating degradation of 7-alpha,25-dihydroxycholesterol (7-alpha,25-OHC): 7-alpha,25-OHC acts as a ligand for the G protein-coupled receptor GPR183/EBI2, a chemotactic receptor for a number of lymphoid cells. This chain is 3 beta-hydroxysteroid dehydrogenase type 7, found in Mus musculus (Mouse).